A 217-amino-acid polypeptide reads, in one-letter code: Meiotic expression up-regulated protein 29 (217 aa).

A signal peptide spans 1 to 21 (MFVVKTAVLLFFALFIGNTYA). At 22 to 133 (YTYSLDRIQA…SGVLLHRPWK (112 aa)) the chain is on the extracellular side. N-linked (GlcNAc...) asparagine glycosylation occurs at Asn84. A helical transmembrane segment spans residues 134-154 (LFSLKPFTAAFVLLLAASYLA). The Cytoplasmic portion of the chain corresponds to 155-217 (TACFRMLGYL…VPVPVLDESV (63 aa)).

It is found in the membrane. The chain is Meiotic expression up-regulated protein 29 (meu29) from Schizosaccharomyces pombe (strain 972 / ATCC 24843) (Fission yeast).